Here is a 359-residue protein sequence, read N- to C-terminus: UPF0283 membrane protein RHECIAT_CH0002430 (359 aa).

The tract at residues 1 to 50 is disordered; sequence MSKPPSDPPRRPPAAFAYEDEASEPRNSGRQQQGRRKPESFSENIVVTPD. 2 helical membrane passes run 77 to 97 and 111 to 131; these read FGKI…GLWT and LGYA…ALVI.

The protein belongs to the UPF0283 family.

It is found in the cell inner membrane. The protein is UPF0283 membrane protein RHECIAT_CH0002430 of Rhizobium etli (strain CIAT 652).